The primary structure comprises 137 residues: Large ribosomal subunit protein uL22 (137 aa).

This sequence belongs to the universal ribosomal protein uL22 family. As to quaternary structure, part of the 50S ribosomal subunit.

Its function is as follows. This protein binds specifically to 23S rRNA; its binding is stimulated by other ribosomal proteins, e.g. L4, L17, and L20. It is important during the early stages of 50S assembly. It makes multiple contacts with different domains of the 23S rRNA in the assembled 50S subunit and ribosome. In terms of biological role, the globular domain of the protein is located near the polypeptide exit tunnel on the outside of the subunit, while an extended beta-hairpin is found that lines the wall of the exit tunnel in the center of the 70S ribosome. This is Large ribosomal subunit protein uL22 from Flavobacterium johnsoniae (strain ATCC 17061 / DSM 2064 / JCM 8514 / BCRC 14874 / CCUG 350202 / NBRC 14942 / NCIMB 11054 / UW101) (Cytophaga johnsonae).